The sequence spans 347 residues: Heat-inducible transcription repressor HrcA (347 aa).

Belongs to the HrcA family.

Its function is as follows. Negative regulator of class I heat shock genes (grpE-dnaK-dnaJ and groELS operons). Prevents heat-shock induction of these operons. The protein is Heat-inducible transcription repressor HrcA of Lactococcus lactis subsp. lactis (strain IL1403) (Streptococcus lactis).